Here is a 429-residue protein sequence, read N- to C-terminus: Nocturnin (429 aa).

Residues 1-73 (MYQSPRRLCS…SMGNGTSRLY (73 aa)) constitute a mitochondrion transit peptide. The interval 21–68 (RRTLVPGPRRTLAPPVLGSRPKSPQLQAAAASGAARSRPRTVSSMGNG) is disordered. E193 contacts Mg(2+). Substrate contacts are provided by residues E193, 217 to 219 (KPW), N261, 284 to 287 (HLKA), and 322 to 324 (DFN). Residues 341–351 (NLNSAYKLLSP) form an interaction with PPARG region. H412 serves as a coordination point for substrate.

It belongs to the CCR4/nocturin family. In terms of assembly, interacts with PPARG. The cofactor is Mg(2+). In terms of tissue distribution, highly expressed in the differentiated adipocyte (at protein level). Ubiquitous.

The protein resides in the cytoplasm. Its subcellular location is the nucleus. The protein localises to the perinuclear region. It localises to the mitochondrion. It catalyses the reaction NADP(+) + H2O = phosphate + NAD(+). The enzyme catalyses NADPH + H2O = phosphate + NADH. Phosphatase which catalyzes the conversion of NADP(+) to NAD(+) and of NADPH to NADH. Shows a small preference for NADPH over NADP(+). Represses translation and promotes degradation of target mRNA molecules. Plays an important role in post-transcriptional regulation of metabolic genes under circadian control. Exerts a rhythmic post-transcriptional control of genes necessary for metabolic functions including nutrient absorption, glucose/insulin sensitivity, lipid metabolism, adipogenesis, inflammation and osteogenesis. Plays an important role in favoring adipogenesis over osteoblastogenesis and acts as a key regulator of the adipogenesis/osteogenesis balance. Promotes adipogenesis by facilitating PPARG nuclear translocation which activates its transcriptional activity. Regulates circadian expression of NOS2 in the liver and negatively regulates the circadian expression of IGF1 in the bone. Critical for proper development of early embryos. This is Nocturnin from Mus musculus (Mouse).